A 375-amino-acid polypeptide reads, in one-letter code: Chaperone protein DnaJ (375 aa).

The region spanning aspartate 5–glycine 70 is the J domain. A CR-type zinc finger spans residues glycine 136 to isoleucine 214. Zn(2+) contacts are provided by cysteine 149, cysteine 152, cysteine 166, cysteine 169, cysteine 188, cysteine 191, cysteine 202, and cysteine 205. 4 CXXCXGXG motif repeats span residues cysteine 149 to glycine 156, cysteine 166 to glycine 173, cysteine 188 to glycine 195, and cysteine 202 to glycine 209.

It belongs to the DnaJ family. In terms of assembly, homodimer. It depends on Zn(2+) as a cofactor.

The protein localises to the cytoplasm. Participates actively in the response to hyperosmotic and heat shock by preventing the aggregation of stress-denatured proteins and by disaggregating proteins, also in an autonomous, DnaK-independent fashion. Unfolded proteins bind initially to DnaJ; upon interaction with the DnaJ-bound protein, DnaK hydrolyzes its bound ATP, resulting in the formation of a stable complex. GrpE releases ADP from DnaK; ATP binding to DnaK triggers the release of the substrate protein, thus completing the reaction cycle. Several rounds of ATP-dependent interactions between DnaJ, DnaK and GrpE are required for fully efficient folding. Also involved, together with DnaK and GrpE, in the DNA replication of plasmids through activation of initiation proteins. The chain is Chaperone protein DnaJ from Oleidesulfovibrio alaskensis (strain ATCC BAA-1058 / DSM 17464 / G20) (Desulfovibrio alaskensis).